The primary structure comprises 298 residues: Glutamyl-Q tRNA(Asp) synthetase (298 aa).

Residues arginine 8 to serine 12 and glutamate 44 each bind L-glutamate. Residues proline 11–serine 21 carry the 'HIGH' region motif. Zn(2+) is bound by residues cysteine 100, cysteine 102, tyrosine 123, and cysteine 127. L-glutamate-binding residues include tyrosine 183 and arginine 201. The short motif at lysine 239–glutamine 243 is the 'KMSKS' region element. Residue lysine 242 coordinates ATP.

This sequence belongs to the class-I aminoacyl-tRNA synthetase family. GluQ subfamily. It depends on Zn(2+) as a cofactor.

In terms of biological role, catalyzes the tRNA-independent activation of glutamate in presence of ATP and the subsequent transfer of glutamate onto a tRNA(Asp). Glutamate is transferred on the 2-amino-5-(4,5-dihydroxy-2-cyclopenten-1-yl) moiety of the queuosine in the wobble position of the QUC anticodon. The polypeptide is Glutamyl-Q tRNA(Asp) synthetase (Burkholderia cenocepacia (strain ATCC BAA-245 / DSM 16553 / LMG 16656 / NCTC 13227 / J2315 / CF5610) (Burkholderia cepacia (strain J2315))).